Consider the following 514-residue polypeptide: Probable cytochrome P450 6w1 (514 aa).

Cys-450 serves as a coordination point for heme.

The protein belongs to the cytochrome P450 family. The cofactor is heme.

It localises to the endoplasmic reticulum membrane. The protein localises to the microsome membrane. Its function is as follows. May be involved in the metabolism of insect hormones and in the breakdown of synthetic insecticides. The chain is Probable cytochrome P450 6w1 (Cyp6w1) from Drosophila melanogaster (Fruit fly).